Consider the following 303-residue polypeptide: MLWFKNLMVYRLSREVSLQAEEMEKQLAAYTFTPCGSQDMAKTGWVAPMGSQSDALTHTTNGQIILCARKEEKILPSPVVKQALEAKIFKLEAEQGRKLKKTEKDSLKDEVLHSLLPRAFSRFNQTMMWIDTVNDLIMVDCASAKKAEDTLALLRKSLGSLPVVPLTMENPIELTLTEWVRSGSPAQGFQLLDEAELKAILEDGGVIRAKKQDLVCDEIAVHIEAGKLVTKLALDWQQRIQFVMCDDGSIKRLKFCDELRDQNEDIEREDVSGRFDADFILMTGELAALIKNLVEGLGGEAQR.

This sequence belongs to the RdgC family.

Its subcellular location is the cytoplasm. The protein localises to the nucleoid. May be involved in recombination. The chain is Recombination-associated protein RdgC from Enterobacter sp. (strain 638).